A 725-amino-acid polypeptide reads, in one-letter code: Antigen peptide transporter 1 (725 aa).

Over 1 to 8 (MAAHAWPT) the chain is Cytoplasmic. The chain crosses the membrane as a helical span at residues 9–29 (AALLLLLVDWLLLRPVLPGIF). Residues 30–38 (SLLVPEVPL) are Lumenal-facing. A helical membrane pass occupies residues 39–60 (LRVWAVGLSRWAILGLGVRGVL). The Cytoplasmic portion of the chain corresponds to 61–67 (GVTAGAR). A helical transmembrane segment spans residues 68 to 88 (GWLAALQPLVAALGLALPGLA). At 89-110 (SFRKLSAWGALREGDNAGLLHW) the chain is on the lumenal side. A helical membrane pass occupies residues 111 to 131 (NSRLDAFVLSYVAALPAAALW). The Cytoplasmic portion of the chain corresponds to 132-163 (HKLGGFWAPSGHKGAGDMLCRMLGFLDSKKGR). Residues 164–184 (LHLVLVLLILSCLGEMAIPFF) form a helical membrane-spanning segment. In terms of domain architecture, ABC transmembrane type-1 spans 164-447 (LHLVLVLLIL…LLSIYPSMQK (284 aa)). Over 185–204 (TGRITDWILQDKTAPSFARN) the chain is Lumenal. Residues 205–225 (MWLMCILTIASTVLEFAGDGI) form a helical membrane-spanning segment. Residues 226 to 275 (YNITMGHMHSRVHGEVFRAVLHQETGFFLKNPTGSITSRVTEDTSNVCES) are Cytoplasmic-facing. The chain crosses the membrane as a helical span at residues 276–296 (ISDKLNLFLWYLGRGLCLLAF). The Lumenal segment spans residues 297–305 (MIWGSFYLT). A helical membrane pass occupies residues 306 to 326 (VVTLLSLPLLFLLPRRLGKVY). The Cytoplasmic portion of the chain corresponds to 327 to 395 (QSLAVKVQES…VTEVWTMSVS (69 aa)). The tract at residues 352-397 (PTVRSFANEEGEAQKFRQKLEEMKPLNKKEALAYVTEVWTMSVSGM) is part of the peptide-binding site. The chain crosses the membrane as a helical span at residues 396-416 (GMLLKVGILYLGGQLVVRGAV). The Lumenal portion of the chain corresponds to 417 to 420 (SSGN). The chain crosses the membrane as a helical span at residues 421-441 (LVSFVLYQLQFTRAVEVLLSI). The interval 430–464 (QFTRAVEVLLSIYPSMQKSVGASEKIFEYLDRTPC) is part of the peptide-binding site. The Cytoplasmic segment spans residues 442-725 (YPSMQKSVGA…MVEALAAPSD (284 aa)). In terms of domain architecture, ABC transporter spans 480-719 (VKFQDVSFAY…GGCYRSMVEA (240 aa)). ATP contacts are provided by residues 515–523 (GPNGSGKST), 618–624 (NQLSGGQ), and glutamine 678. Position 522 (serine 522) interacts with Mg(2+).

This sequence belongs to the ABC transporter superfamily. ABCB family. MHC peptide exporter (TC 3.A.1.209) subfamily. In terms of assembly, heterodimer of TAP1 and TAP2 (TAP1-TAP2). A component of the peptide loading complex (PLC), interacts via TAPBP with MHCI heterodimer; this interaction mediates peptide-MHCI assembly. Interacts with PSMB5 and PSMB8. Mg(2+) serves as cofactor.

The protein resides in the endoplasmic reticulum membrane. The enzyme catalyses a peptide antigen(in) + ATP + H2O = a peptide antigen(out) + ADP + phosphate + H(+). ABC transporter associated with antigen processing. In complex with TAP2 mediates unidirectional translocation of peptide antigens from cytosol to endoplasmic reticulum (ER) for loading onto MHC class I (MHCI) molecules. Uses the chemical energy of ATP to export peptides against the concentration gradient. During the transport cycle alternates between 'inward-facing' state with peptide binding site facing the cytosol to 'outward-facing' state with peptide binding site facing the ER lumen. Peptide antigen binding to ATP-loaded TAP1-TAP2 induces a switch to hydrolysis-competent 'outward-facing' conformation ready for peptide loading onto nascent MHCI molecules. Subsequently ATP hydrolysis resets the transporter to the 'inward facing' state for a new cycle. As a component of the peptide loading complex (PLC), acts as a molecular scaffold essential for peptide-MHCI assembly and antigen presentation. In Rattus norvegicus (Rat), this protein is Antigen peptide transporter 1 (Tap1).